We begin with the raw amino-acid sequence, 371 residues long: S-adenosylmethionine:tRNA ribosyltransferase-isomerase (371 aa).

It belongs to the QueA family. In terms of assembly, monomer.

Its subcellular location is the cytoplasm. It catalyses the reaction 7-aminomethyl-7-carbaguanosine(34) in tRNA + S-adenosyl-L-methionine = epoxyqueuosine(34) in tRNA + adenine + L-methionine + 2 H(+). It participates in tRNA modification; tRNA-queuosine biosynthesis. Its function is as follows. Transfers and isomerizes the ribose moiety from AdoMet to the 7-aminomethyl group of 7-deazaguanine (preQ1-tRNA) to give epoxyqueuosine (oQ-tRNA). This chain is S-adenosylmethionine:tRNA ribosyltransferase-isomerase, found in Rickettsia akari (strain Hartford).